Here is a 135-residue protein sequence, read N- to C-terminus: Small ribosomal subunit protein uS9 (135 aa).

It belongs to the universal ribosomal protein uS9 family.

This chain is Small ribosomal subunit protein uS9, found in Petrotoga mobilis (strain DSM 10674 / SJ95).